A 174-amino-acid chain; its full sequence is Small ribosomal subunit protein uS5 (174 aa).

The S5 DRBM domain maps to 20–83 (IEDQLVAINR…EAGKKRMIKV (64 aa)).

Belongs to the universal ribosomal protein uS5 family. Part of the 30S ribosomal subunit. Contacts proteins S4 and S8.

Functionally, with S4 and S12 plays an important role in translational accuracy. Its function is as follows. Located at the back of the 30S subunit body where it stabilizes the conformation of the head with respect to the body. The protein is Small ribosomal subunit protein uS5 of Lactobacillus gasseri (strain ATCC 33323 / DSM 20243 / BCRC 14619 / CIP 102991 / JCM 1131 / KCTC 3163 / NCIMB 11718 / NCTC 13722 / AM63).